We begin with the raw amino-acid sequence, 85 residues long: 4-hydroxyphenylacetate decarboxylase small subunit (85 aa).

8 residues coordinate [4Fe-4S] cluster: His-4, Cys-7, Cys-20, Cys-34, Cys-43, Cys-46, Cys-60, and Cys-78.

This sequence belongs to the HPA decarboxylase small subunit family. Heterooctamer consisting of 4 large (HpdB) subunits and 4 small (HpdC) subunits, arranged as a tetramer of heterodimers. [4Fe-4S] cluster serves as cofactor.

The enzyme catalyses 4-hydroxyphenylacetate + H(+) = 4-methylphenol + CO2. It carries out the reaction 3,4-dihydroxyphenylacetate + H(+) = 4-methylcatechol + CO2. Its function is as follows. Component of the HPA decarboxylase that decarboxylates phenylacetates with a hydroxyl group in the p-position. Active toward 4-hydroxyphenylacetate and 3,4-dihydroxyphenylacetate, forming 4-methylphenol and 4-methylcatechol, respectively. Is likely involved in the catabolism of aromatic amino acids such as tyrosine fermentation. 4-methylphenol (p-cresol) formation provides metabolic toxicity, which allows an active suppression of other microbes and may provide growth advantages for the producers in highly competitive environments. The small subunit is essential for enzymatic activity of HPA decarboxylase, and also seems to be involved in the regulation of the enzyme oligomeric state and catalytic activity. The chain is 4-hydroxyphenylacetate decarboxylase small subunit from Clostridioides difficile (strain 630) (Peptoclostridium difficile).